A 349-amino-acid chain; its full sequence is Histidinol-phosphate aminotransferase (349 aa).

The interval 1–22 is disordered; it reads MVSIRPSVRHTPAYVPGEQPQT. At lysine 207 the chain carries N6-(pyridoxal phosphate)lysine.

Belongs to the class-II pyridoxal-phosphate-dependent aminotransferase family. Histidinol-phosphate aminotransferase subfamily. As to quaternary structure, homodimer. Pyridoxal 5'-phosphate serves as cofactor.

The catalysed reaction is L-histidinol phosphate + 2-oxoglutarate = 3-(imidazol-4-yl)-2-oxopropyl phosphate + L-glutamate. The protein operates within amino-acid biosynthesis; L-histidine biosynthesis; L-histidine from 5-phospho-alpha-D-ribose 1-diphosphate: step 7/9. The chain is Histidinol-phosphate aminotransferase (hisC) from Synechocystis sp. (strain ATCC 27184 / PCC 6803 / Kazusa).